The sequence spans 348 residues: MKKSLIALTLAALPVAAMADVTLYGAIKAGVQTYRSVEHTDGKVSKVETGSEIADFGSKIGFKGQEDLGNGLKAVWQLEQGASVAGTNTGWGNKQSFVGLKGGFGTIRAGSLNSPLKNTGANVNAWESGKFTGNVLEISGMAQREHRYLSVRYDSPEFAGFSGSVQYAPKDNSGSNGESYHVGLNYQNSGFFAQYAGLFQRYGEGTKKIEYDDQTYSIPSLFVEKLQVHRLVGGYDNNALYVSVAAQQQDAKLYGAMSGNSHNSQTEVAATAAYRFGNVTPRVSYAHGFKGTVDSANHDNTYDQVVVGAEYDFSKRTSALVSAGWLQGGKGADKIVSTASAVVLRHKF.

Positions 1–19 (MKKSLIALTLAALPVAAMA) are cleaved as a signal peptide.

Belongs to the Gram-negative porin family. As to quaternary structure, homotrimer.

It is found in the cell outer membrane. Functionally, serves as a slightly cation selective porin. Major antigen on the gonococcal cell surface and it may have pathogenic properties in addition to its porin activity. The protein is Major outer membrane protein P.IB (porB) of Neisseria gonorrhoeae.